Reading from the N-terminus, the 205-residue chain is Large ribosomal subunit protein uL4 (205 aa).

Residues 53 to 77 (RAAVRGGGRKPWKQKGTGRARAGSI) form a disordered region. Residues 59–70 (GGRKPWKQKGTG) show a composition bias toward basic residues.

The protein belongs to the universal ribosomal protein uL4 family. Part of the 50S ribosomal subunit.

Functionally, one of the primary rRNA binding proteins, this protein initially binds near the 5'-end of the 23S rRNA. It is important during the early stages of 50S assembly. It makes multiple contacts with different domains of the 23S rRNA in the assembled 50S subunit and ribosome. Its function is as follows. Forms part of the polypeptide exit tunnel. The sequence is that of Large ribosomal subunit protein uL4 from Acidithiobacillus ferrooxidans (strain ATCC 23270 / DSM 14882 / CIP 104768 / NCIMB 8455) (Ferrobacillus ferrooxidans (strain ATCC 23270)).